A 490-amino-acid polypeptide reads, in one-letter code: 3-octaprenyl-4-hydroxybenzoate carboxy-lyase (490 aa).

N172 is a binding site for Mn(2+). Residues 175–177 (IYR), 189–191 (RWL), and 194–195 (RG) contribute to the prenylated FMN site. E238 lines the Mn(2+) pocket. D287 serves as the catalytic Proton donor.

The protein belongs to the UbiD family. As to quaternary structure, homohexamer. Requires prenylated FMN as cofactor. The cofactor is Mn(2+).

The protein resides in the cell membrane. The enzyme catalyses a 4-hydroxy-3-(all-trans-polyprenyl)benzoate + H(+) = a 2-(all-trans-polyprenyl)phenol + CO2. It participates in cofactor biosynthesis; ubiquinone biosynthesis. Its function is as follows. Catalyzes the decarboxylation of 3-octaprenyl-4-hydroxy benzoate to 2-octaprenylphenol, an intermediate step in ubiquinone biosynthesis. The protein is 3-octaprenyl-4-hydroxybenzoate carboxy-lyase of Saccharophagus degradans (strain 2-40 / ATCC 43961 / DSM 17024).